We begin with the raw amino-acid sequence, 41 residues long: uncharacterized protein (41 aa).

The protein localises to the plastid. The protein resides in the chloroplast. This is an uncharacterized protein from Trieres chinensis (Marine centric diatom).